The primary structure comprises 337 residues: Phosphate acyltransferase (337 aa).

The protein belongs to the PlsX family. As to quaternary structure, homodimer. Probably interacts with PlsY.

It is found in the cytoplasm. The enzyme catalyses a fatty acyl-[ACP] + phosphate = an acyl phosphate + holo-[ACP]. It participates in lipid metabolism; phospholipid metabolism. Its function is as follows. Catalyzes the reversible formation of acyl-phosphate (acyl-PO(4)) from acyl-[acyl-carrier-protein] (acyl-ACP). This enzyme utilizes acyl-ACP as fatty acyl donor, but not acyl-CoA. This chain is Phosphate acyltransferase, found in Aromatoleum aromaticum (strain DSM 19018 / LMG 30748 / EbN1) (Azoarcus sp. (strain EbN1)).